The chain runs to 484 residues: UDP-N-acetylmuramoyl-L-alanyl-D-glutamate--2,6-diaminopimelate ligase (484 aa).

A UDP-N-acetyl-alpha-D-muramoyl-L-alanyl-D-glutamate-binding site is contributed by serine 30. Glycine 109–serine 115 is an ATP binding site. UDP-N-acetyl-alpha-D-muramoyl-L-alanyl-D-glutamate is bound by residues threonine 151–threonine 152, serine 178, and arginine 186. Lysine 218 carries the post-translational modification N6-carboxylysine. Residues arginine 379, aspartate 403–arginine 406, glycine 455, and glutamate 459 contribute to the meso-2,6-diaminopimelate site. A Meso-diaminopimelate recognition motif motif is present at residues aspartate 403–arginine 406.

Belongs to the MurCDEF family. MurE subfamily. The cofactor is Mg(2+). Post-translationally, carboxylation is probably crucial for Mg(2+) binding and, consequently, for the gamma-phosphate positioning of ATP.

It is found in the cytoplasm. The catalysed reaction is UDP-N-acetyl-alpha-D-muramoyl-L-alanyl-D-glutamate + meso-2,6-diaminopimelate + ATP = UDP-N-acetyl-alpha-D-muramoyl-L-alanyl-gamma-D-glutamyl-meso-2,6-diaminopimelate + ADP + phosphate + H(+). It functions in the pathway cell wall biogenesis; peptidoglycan biosynthesis. Functionally, catalyzes the addition of meso-diaminopimelic acid to the nucleotide precursor UDP-N-acetylmuramoyl-L-alanyl-D-glutamate (UMAG) in the biosynthesis of bacterial cell-wall peptidoglycan. The polypeptide is UDP-N-acetylmuramoyl-L-alanyl-D-glutamate--2,6-diaminopimelate ligase (Clostridioides difficile (strain 630) (Peptoclostridium difficile)).